The following is a 750-amino-acid chain: GTP pyrophosphokinase rsh (750 aa).

Positions 45–144 (YFSHPLEVAA…VKLADRLHNM (100 aa)) constitute an HD domain. One can recognise a TGS domain in the interval 390–451 (DQVFCFTPKG…KNGDEVDIIR (62 aa)). A disordered region spans residues 587 to 613 (AAKVDPAATTPKPGKRALPIRGTNPDL). The ACT domain occupies 676-750 (RISVSAINSP…SVSSAKRVNG (75 aa)).

It belongs to the RelA/SpoT family.

The enzyme catalyses GTP + ATP = guanosine 3'-diphosphate 5'-triphosphate + AMP. Its function is as follows. Functions as a (p)ppGpp synthase. In eubacteria ppGpp (guanosine 3'-diphosphate 5'-diphosphate) is a mediator of the stringent response that coordinates a variety of cellular activities in response to changes in nutritional abundance. It is necessary for persistence in mice, essential for intracellular growth of Brucella and required for expression of the type IV secretion system VirB and therefore plays a role in adaptation of Brucella to its intracellular host environment. The chain is GTP pyrophosphokinase rsh (rsh) from Brucella suis biovar 1 (strain 1330).